A 256-amino-acid polypeptide reads, in one-letter code: Small ribosomal subunit protein eS1B (256 aa).

At alanine 2 the chain carries N-acetylalanine; partial.

It belongs to the eukaryotic ribosomal protein eS1 family. In terms of assembly, component of the small ribosomal subunit. Mature ribosomes consist of a small (40S) and a large (60S) subunit. The 40S subunit contains about 33 different proteins and 1 molecule of RNA (18S). The 60S subunit contains about 49 different proteins and 3 molecules of RNA (25S, 5.8S and 5S).

The protein resides in the cytoplasm. In Clavispora lusitaniae (strain ATCC 42720) (Yeast), this protein is Small ribosomal subunit protein eS1B.